We begin with the raw amino-acid sequence, 205 residues long: Outer-membrane lipoprotein carrier protein (205 aa).

Positions 1-19 (MKKIIICFIFVFSINISFA) are cleaved as a signal peptide.

Belongs to the LolA family. Monomer.

It is found in the periplasm. Participates in the translocation of lipoproteins from the inner membrane to the outer membrane. Only forms a complex with a lipoprotein if the residue after the N-terminal Cys is not an aspartate (The Asp acts as a targeting signal to indicate that the lipoprotein should stay in the inner membrane). The polypeptide is Outer-membrane lipoprotein carrier protein (Francisella tularensis subsp. novicida (strain U112)).